A 395-amino-acid chain; its full sequence is Nucleoside diphosphate kinase homolog 7 (395 aa).

In terms of domain architecture, DM10 spans 22–110 (QSERFAFIAE…YTARQLGSRK (89 aa)).

This sequence belongs to the NDK family. Component of sperm flagellar doublet microtubules. Component of the gamma-tubulin ring complex. In terms of tissue distribution, widely expressed. Expressed in the flagellum of epididymal sperm but not in testicular sperm (at protein level).

Its subcellular location is the cytoplasm. It localises to the cytoskeleton. The protein localises to the microtubule organizing center. The protein resides in the centrosome. It is found in the nucleus. Its subcellular location is the spindle. It localises to the cilium axoneme. The protein localises to the flagellum axoneme. The protein resides in the cell projection. It is found in the cilium. Its function is as follows. Possesses an intrinsic kinase activity. Displays 3'-5' exonuclease activity with a preference for single-stranded DNA. Does not seem to have nucleoside diphosphate kinase activity. Functional component of the gamma-tubulin ring complex, implicated in the regulation of the microtubule-nucleating activity of the gamma-tubulin ring complex in centrosomes, in a kinase activity-dependent manner. Part of the dynein-decorated doublet microtubules (DMTs) in cilia axoneme, which is required for motile cilia beating. The protein is Nucleoside diphosphate kinase homolog 7 (Nme7) of Rattus norvegicus (Rat).